The following is a 620-amino-acid chain: Carotenoid isomerooxygenase (620 aa).

Fe cation-binding residues include His-211, His-267, and His-337. A disordered region spans residues 440 to 459 (NGKQATAGEESPKRDAKRGR). A compositionally biased stretch (basic and acidic residues) spans 449–459 (ESPKRDAKRGR). A Fe cation-binding site is contributed by His-612.

The protein belongs to the carotenoid oxygenase family. The cofactor is Fe(2+). As to expression, expression follows organogenesis of the larval Bolwig's organ (BO), which mediates larval photophobic behavior. In the adult, expression is restricted exclusively to the brain. Expressed in both neuronal cells and glia cells. Not active within photoreceptors. Active within neuronal cells within the central nervous system.

The catalysed reaction is all-trans-zeaxanthin + O2 = (3R)-11-cis-3-hydroxyretinal + (3R)-all-trans-3-hydroxyretinal. The protein operates within cofactor metabolism; retinol metabolism. In terms of biological role, catalyzes the oxidative cleavage at the 15,15'-double bond of carotenoids and the simultaneous all-trans to 11-cis isomerization of one cleavage product. Carotenoids like 11-cis retinal can promote visual pigment biogenesis in the dark. Essential for the biosynthesis of the 3-hydroxyretinal chromophore of rhodopsin from zeaxanthin and for proper photoreceptor development. Also essential for larval light perception. The protein is Carotenoid isomerooxygenase (ninaB) of Drosophila melanogaster (Fruit fly).